The primary structure comprises 529 residues: CRISPR-associated endodeoxyribonuclease Cas12f1 (529 aa).

Residues 1-95 (MAKNTITKTL…RGQFPDAVFW (95 aa)) form a zinc finger domain (ZF) region. Zn(2+) is bound by residues Cys-50, His-53, Cys-69, and Cys-72. Residues 96-192 (QEISEIFRQL…PTTKSDNFPI (97 aa)) form a recognition domain (REC) region. The segment at 193–312 (PLVKQKGGQY…MLNLSIDVPK (120 aa)) is wedge domain (WED). Positions 313–321 (IDKGVDPSI) are linker. Residues 322–473 (IGGIDVGVKS…RKVAPNNTSK (152 aa)) are ruvC-I. Catalysis depends on residues Asp-326 and Glu-422. Residues 474 to 508 (TCSKCGHLNNYFNFEYRKKNKFPHFKCEKCNFKEN) form a target nucleic acid-binding (TNB) region. Zn(2+) contacts are provided by Cys-475 and Cys-478. Arg-490 is an active-site residue. Residues Cys-500 and Cys-503 each contribute to the Zn(2+) site. Residues 509–529 (ADYNAALNISNPKLKSTKEEP) are ruvC-II. The active site involves Asp-510.

This sequence belongs to the CRISPR-associated endonuclease Cas12f family. An asymmetric homodimer. Guide RNA is probably required for dimerization. Requires Mg(2+) as cofactor. The cofactor is Zn(2+).

Its activity is regulated as follows. Target ssDNA cleavage is inhibited by EDTA. Activity is maximal with 5-50 mM NaCl, is less efficient at higher NaCl concentrations. Its function is as follows. CRISPR (clustered regularly interspaced short palindromic repeat), is an adaptive immune system that provides protection against mobile genetic elements (viruses, transposable elements and conjugative plasmids). CRISPR clusters contain sequences complementary to antecedent mobile elements and target invading nucleic acids. CRISPR clusters are transcribed and processed into CRISPR RNA (crRNA), which requires a trans-encoded small RNA (tracrRNA), but not this protein (in vitro). Upon expression in E.coli of this protein, a mini CRISPR array and the probable tracrRNA, the protein associates with both RNAs. The mini system is not active in E.coli against phiX174 phage, nor is it active in protection against transformation by foreign plasmids. In vitro the purified protein-tracrRNA-crRNA complex cleaves ssDNA complementary to the crRNA; target cleavage requires both tracrRNA and crRNA, but not a protospacer adjacent motif (PAM). The tracrRNA-crRNA can be replaced by a single guide RNA (sgRNA). 2-nucleotide mismatches in the middle of the crRNA:DNA heteroduplex decrease cleavage. Cleavage occurs just downstream of the heteroduplex. Activation of this protein results in non-specific ssDNA degradation in vitro. In vitro and in E.coli (coexpressed with sgRNA) has dsDNA endonuclease activity, recognizing the 5' PAM sequence TTTR; both sgRNA and a PAM are required for activity. Cleaves the target strand 24 and the nontarget strand 22 bases upstream of the PAM (respectively), resulting in 5' overhangs. The 2 monomers interact differently with the sgRNA and target DNA. Mutagenesis of a dimeric construct shows that one of the RuvC monomers probably cleaves both DNA strands. This Uncultured archaeon protein is CRISPR-associated endodeoxyribonuclease Cas12f1.